The following is a 91-amino-acid chain: Small ribosomal subunit protein bS16 (91 aa).

It belongs to the bacterial ribosomal protein bS16 family.

The protein is Small ribosomal subunit protein bS16 of Streptococcus mutans serotype c (strain ATCC 700610 / UA159).